The primary structure comprises 515 residues: MGLHFKWPLGAPMLAAIYAMSVVLKMLPALGMACPPKCRCEKLLFYCDSQGFHSVPNATDKGSLGLSLRHNHITALERDQFASFSQLTWLHLDHNQISTVKEDAFQGLYKLKELILSSNKIFYLPNTTFTQLINLQNLDLSFNQLSSLHPELFYGLRKLQTLHLRSNSLRTIPVRLFWDCRSLEFLDLSTNRLRSLARNGFAGLIKLRELHLEHNQLTKINFAHFLRLSSLHTLFLQWNKISNLTCGMEWTWSTLEKLDLTGNEIKAIDLTVFETMPNLKILLMDNNKLNSLDSKILSSLRSLTTVGLSGNLWECSPRVCALASWLGSFQGRWEHSILCHSPDHTQGEDILDAVHGFQLCWNLSTTVTAMATTYRDPTTEYTKISSSSYHVGDKEIPTTAGIAVTTEEHFPEPDNAIFTQRVITGTMALLFSFFFIIFIVFISRKCCPPTLRRIRQCSMIQNHRQLRSQTRLHMSNMSDQGPYSEYEPTHEGPFIIINGYGQCKCQQLPYKECEV.

An N-terminal signal peptide occupies residues 1-33; that stretch reads MGLHFKWPLGAPMLAAIYAMSVVLKMLPALGMA. The Extracellular portion of the chain corresponds to 34–421; sequence CPPKCRCEKL…EPDNAIFTQR (388 aa). N-linked (GlcNAc...) asparagine glycosylation is present at Asn57. LRR repeat units follow at residues 61–83, 84–107, 109–131, 132–155, 156–179, 181–203, 205–227, 229–251, 252–275, and 276–299; these read KGSLGLSLRHNHITALERDQFAS, FSQLTWLHLDHNQISTVKEDAFQG, YKLKELILSSNKIFYLPNTTFTQ, LINLQNLDLSFNQLSSLHPELFYG, LRKLQTLHLRSNSLRTIPVRLFWD, RSLEFLDLSTNRLRSLARNGFAG, IKLRELHLEHNQLTKINFAHFLR, SSLHTLFLQWNKISNLTCGMEWT, WSTLEKLDLTGNEIKAIDLTVFET, and MPNLKILLMDNNKLNSLDSKILSS. Residue Asn126 is glycosylated (N-linked (GlcNAc...) asparagine). N-linked (GlcNAc...) asparagine glycosylation is present at Asn243. N-linked (GlcNAc...) asparagine glycosylation occurs at Asn362. The helical transmembrane segment at 422-442 threads the bilayer; it reads VITGTMALLFSFFFIIFIVFI. Residues 443-515 lie on the Cytoplasmic side of the membrane; sequence SRKCCPPTLR…QQLPYKECEV (73 aa). The Involved in DLG4-binding motif lies at 512–515; that stretch reads ECEV.

This sequence belongs to the LRRTM family. In terms of assembly, interacts with DLG4. Interacts with neurexin NRXN1; interaction is mediated by heparan sulfate glycan modification on neurexin. Expressed in neuronal tissues. Widely distributed in neuropil regions in discrete puncta throughout the brain (at protein level). Detected in cortex, thalamus, striatum, olfactory bulb, cerebellum and all hippocampal subfields (at protein level). More abundant in deep than in superficial layers of neocortex (at protein level).

It localises to the cell membrane. Its subcellular location is the postsynaptic cell membrane. Functionally, involved in the development and maintenance of excitatory synapses in the nervous system. Regulates surface expression of AMPA receptors and instructs the development of functional glutamate release sites. Acts as a ligand for the presynaptic receptors NRXN1-A and NRXN1-B. In Rattus norvegicus (Rat), this protein is Leucine-rich repeat transmembrane neuronal protein 2 (Lrrtm2).